We begin with the raw amino-acid sequence, 115 residues long: MSLDPTIAARLKRNADGLFTAVVQERGSGDVLMVAWMDDDALARTLETREATYFSRSRGEQWIKGRTSGHTQHVHSVRLDCDGDTVLLVVDQVGGACHTGDHSCFDADLLLDPEA.

Mg(2+) is bound at residue D80. C81 serves as a coordination point for Zn(2+). Mg(2+) contacts are provided by D82 and D84. Positions 97 and 104 each coordinate Zn(2+).

This sequence belongs to the PRA-CH family. Homodimer. Requires Mg(2+) as cofactor. The cofactor is Zn(2+).

The protein resides in the cytoplasm. The enzyme catalyses 1-(5-phospho-beta-D-ribosyl)-5'-AMP + H2O = 1-(5-phospho-beta-D-ribosyl)-5-[(5-phospho-beta-D-ribosylamino)methylideneamino]imidazole-4-carboxamide. It participates in amino-acid biosynthesis; L-histidine biosynthesis; L-histidine from 5-phospho-alpha-D-ribose 1-diphosphate: step 3/9. Functionally, catalyzes the hydrolysis of the adenine ring of phosphoribosyl-AMP. This is Phosphoribosyl-AMP cyclohydrolase from Mycolicibacterium gilvum (strain PYR-GCK) (Mycobacterium gilvum (strain PYR-GCK)).